The sequence spans 1122 residues: Protein CAF130 (1122 aa).

A disordered region spans residues 1 to 24; it reads MTKKKAATNYAERQNLASEDSSGD. A compositionally biased stretch (polar residues) spans 11-24; sequence AERQNLASEDSSGD. Ser1042 is modified (phosphoserine).

In terms of assembly, subunit of the 1.0 MDa CCR4-NOT core complex that contains CCR4, CAF1, NOT1, NOT2, NOT3, NOT4, NOT5, CAF40 and CAF130. In the complex interacts with NOT1. The core complex probably is part of a less characterized 1.9 MDa CCR4-NOT complex.

It localises to the cytoplasm. The protein resides in the nucleus. In terms of biological role, acts as a component of the CCR4-NOT core complex, which in the nucleus seems to be a general transcription factor, and in the cytoplasm the major mRNA deadenylase involved in mRNA turnover. This Saccharomyces cerevisiae (strain ATCC 204508 / S288c) (Baker's yeast) protein is Protein CAF130 (CAF130).